The primary structure comprises 192 residues: UPF0312 protein PSPTO_5071 (192 aa).

The N-terminal stretch at 1–23 is a signal peptide; the sequence is MLKKSLAALALGTALLSAGQAMA.

The protein belongs to the UPF0312 family. Type 1 subfamily.

The protein resides in the periplasm. The chain is UPF0312 protein PSPTO_5071 from Pseudomonas syringae pv. tomato (strain ATCC BAA-871 / DC3000).